The chain runs to 602 residues: MVKNRNEIPEALTWDLTTIFSTDQKWETELEKVKKELSLVETNDKGHLLDSAETLLTITKNMLSISQKVEKLYVYASMKNDQDTREAKYQDYQSKATALYVNFGESYAFYEPEFLKNLQKETYGKWLETLQELKNYDHMFERLFAKKEHILSQKEGKILAAPGEIFESPSETFEIFDNADVKFPFVKNELGEKIQLTHGNYGSLMESENREVRKAAYEALYSNYEQCQHTYAKTLQTNVKVHNFNAQIRAYDSARQAALMSNFVPEKVYDVLIEGIHQHLPLLHRYIELRKKILEISDFKMYDIYTPLSNLDYKFNYTEGVKKAQEVLAIFGEEYSQKVKAAFDERWIDVEENVGKRSGAYSGGSYDTKAFMLLNWQGTLDDLFTLVHEMGHSIHSTFTRENQPYVYGDYPIFLAEIASTTNENILTETLLKESNDEKERFALLNHWLDSFRGTVFRQSQFAEFEQKIHEVDAEGEVLTSEFLNSLYGELNEKYYGLSAKENPEIQFEWAKIPHFYYNFYVFQYATGFSAASFIAEKVVHGSVTDRQNYLDYLKAGSSAYPLDVIAKAGVNMESTDYLESAFKLFEKRLNELEKLVEKGVHL.

Residue H388 participates in Zn(2+) binding. Residue E389 is part of the active site. H392 and H395 together coordinate Zn(2+).

Belongs to the peptidase M3B family. Requires Zn(2+) as cofactor.

In terms of biological role, hydrolyzes peptides containing between 7 and 17 amino acids with a rather wide specificity. The polypeptide is Oligoendopeptidase F, chromosomal (pepF2) (Lactococcus lactis subsp. cremoris (Streptococcus cremoris)).